A 515-amino-acid polypeptide reads, in one-letter code: Histidine ammonia-lyase (515 aa).

Positions 146-148 (ASG) form a cross-link, 5-imidazolinone (Ala-Gly). S147 is modified (2,3-didehydroalanine (Ser)).

Belongs to the PAL/histidase family. Contains an active site 4-methylidene-imidazol-5-one (MIO), which is formed autocatalytically by cyclization and dehydration of residues Ala-Ser-Gly.

Its subcellular location is the cytoplasm. It carries out the reaction L-histidine = trans-urocanate + NH4(+). The protein operates within amino-acid degradation; L-histidine degradation into L-glutamate; N-formimidoyl-L-glutamate from L-histidine: step 1/3. This is Histidine ammonia-lyase (hutH) from Ralstonia nicotianae (strain ATCC BAA-1114 / GMI1000) (Ralstonia solanacearum).